The following is a 75-amino-acid chain: Protein RALF-like 9 (75 aa).

The signal sequence occupies residues 1 to 28 (MGMSKSIKVILSLALVVFLALAATKVEA). Intrachain disulfides connect C46–C54 and C66–C72.

Belongs to the plant rapid alkalinization factor (RALF) family.

The protein localises to the secreted. In terms of biological role, cell signaling peptide that may regulate plant stress, growth, and development. Mediates a rapid alkalinization of extracellular space by mediating a transient increase in the cytoplasmic Ca(2+) concentration leading to a calcium-dependent signaling events through a cell surface receptor and a concomitant activation of some intracellular mitogen-activated protein kinases. This chain is Protein RALF-like 9 (RALFL9), found in Arabidopsis thaliana (Mouse-ear cress).